A 333-amino-acid polypeptide reads, in one-letter code: Homoserine O-succinyltransferase (333 aa).

The active-site Acyl-thioester intermediate is Cys147. Positions 168 and 196 each coordinate substrate. The active-site Proton acceptor is the His239. Glu241 is an active-site residue. Arg253 lines the substrate pocket.

This sequence belongs to the MetA family.

The protein localises to the cytoplasm. The catalysed reaction is L-homoserine + succinyl-CoA = O-succinyl-L-homoserine + CoA. Its pathway is amino-acid biosynthesis; L-methionine biosynthesis via de novo pathway; O-succinyl-L-homoserine from L-homoserine: step 1/1. In terms of biological role, transfers a succinyl group from succinyl-CoA to L-homoserine, forming succinyl-L-homoserine. This is Homoserine O-succinyltransferase from Rhodopseudomonas palustris.